We begin with the raw amino-acid sequence, 96 residues long: Phosphoribosyl-ATP pyrophosphatase (96 aa).

This sequence belongs to the PRA-PH family.

The protein resides in the cytoplasm. The catalysed reaction is 1-(5-phospho-beta-D-ribosyl)-ATP + H2O = 1-(5-phospho-beta-D-ribosyl)-5'-AMP + diphosphate + H(+). It participates in amino-acid biosynthesis; L-histidine biosynthesis; L-histidine from 5-phospho-alpha-D-ribose 1-diphosphate: step 2/9. The protein is Phosphoribosyl-ATP pyrophosphatase of Methanococcus maripaludis (strain DSM 14266 / JCM 13030 / NBRC 101832 / S2 / LL).